A 215-amino-acid chain; its full sequence is Cytochrome c biogenesis ATP-binding export protein CcmA (215 aa).

Residues 8-215 enclose the ABC transporter domain; it reads LQATALACER…RDLDLGQWSA (208 aa). An ATP-binding site is contributed by 40 to 47; sequence GPNGCGKT.

This sequence belongs to the ABC transporter superfamily. CcmA exporter (TC 3.A.1.107) family. As to quaternary structure, the complex is composed of two ATP-binding proteins (CcmA) and two transmembrane proteins (CcmB).

The protein localises to the cell inner membrane. The catalysed reaction is heme b(in) + ATP + H2O = heme b(out) + ADP + phosphate + H(+). Part of the ABC transporter complex CcmAB involved in the biogenesis of c-type cytochromes; once thought to export heme, this seems not to be the case, but its exact role is uncertain. Responsible for energy coupling to the transport system. In Pseudomonas syringae pv. syringae (strain B728a), this protein is Cytochrome c biogenesis ATP-binding export protein CcmA.